The primary structure comprises 946 residues: Inhibin beta chain (946 aa).

2 disordered regions span residues 115–142 (VADR…SSTS) and 174–194 (KSRN…RRRR). Positions 128–142 (VSVPTTPNETPSSTS) are enriched in low complexity. N-linked (GlcNAc...) asparagine glycans are attached at residues asparagine 208, asparagine 217, asparagine 271, and asparagine 389. The interval 436-462 (SPGSHLFNGRGGRTDQRSERDPSHHKY) is disordered. The span at 447–459 (GRTDQRSERDPSH) shows a compositional bias: basic and acidic residues. N-linked (GlcNAc...) asparagine glycosylation is found at asparagine 471, asparagine 484, asparagine 542, asparagine 561, asparagine 566, asparagine 732, and asparagine 804. Disulfide bonds link cysteine 837-cysteine 846, cysteine 845-cysteine 912, cysteine 874-cysteine 943, and cysteine 878-cysteine 945.

It belongs to the TGF-beta family. As to quaternary structure, homodimer or heterodimer; disulfide-linked. Cleaved in vitro by metalloproteases tok and tld to produce a 30 kDa product. In terms of tissue distribution, widely expressed in larval brains.

It localises to the secreted. Its function is as follows. Controls several aspects of neuronal morphogenesis; essential for optic lobe development, EcR-B1 expression in larval brains, mushroom body remodeling, dorsal neuron morphogenesis and motoneuron axon guidance. Ligands Actbeta and daw act redundantly through the Activin receptor Babo and its transcriptional mediator Smad2 (Smox), to regulate neuroblast numbers and proliferation rates in the developing larval brain. This is Inhibin beta chain (Actbeta) from Drosophila melanogaster (Fruit fly).